Reading from the N-terminus, the 428-residue chain is Trigger factor (428 aa).

The 86-residue stretch at 163–248 folds into the PPIase FKBP-type domain; that stretch reads GDTAVIDFEG…IKEIKVKELP (86 aa).

The protein belongs to the FKBP-type PPIase family. Tig subfamily.

It is found in the cytoplasm. The catalysed reaction is [protein]-peptidylproline (omega=180) = [protein]-peptidylproline (omega=0). In terms of biological role, involved in protein export. Acts as a chaperone by maintaining the newly synthesized protein in an open conformation. Functions as a peptidyl-prolyl cis-trans isomerase. The polypeptide is Trigger factor (Ruminiclostridium cellulolyticum (strain ATCC 35319 / DSM 5812 / JCM 6584 / H10) (Clostridium cellulolyticum)).